A 386-amino-acid polypeptide reads, in one-letter code: MGNTEIVAMILAGGQGSRLGVLTKKLAKPAVPFGGKYRIIDFPLSNCANSGIYTVGVLTQYKPLELNAHIGIGLPWDLDRKDGGVSILPPYQEEKGGNWYKGTANAIYQNIEFVDRYDPEYVLILSGDHIYKMNYTKMLEFHKEKNADATIGVIEVPVNEASRFGIMNTRDDMSIYEFEEKPKIPKSNLASMGIYIFNWKTLKKYLRNDEANKGSSNDFGKDIIPSMLNDGGKMVAYPFEGYWKDVGTIESLWQANMDLLKSDNKLNLHDQDWRIYSTNPVRPAQYIGENAKVTNSLIVEGCTVNGTVQNSVLFQGVQVGKNTIIKDSVIMTNAKIGDNVIIEKAIIGNDAVIRKDCVIGTGDEIEIVAAKEEVKMGSIMKNNKAV.

Alpha-D-glucose 1-phosphate contacts are provided by residues Tyr100, Gly165, 180–181, and Ser191; that span reads EK.

It belongs to the bacterial/plant glucose-1-phosphate adenylyltransferase family. In terms of assembly, homotetramer.

The catalysed reaction is alpha-D-glucose 1-phosphate + ATP + H(+) = ADP-alpha-D-glucose + diphosphate. Its pathway is glycan biosynthesis; glycogen biosynthesis. Involved in the biosynthesis of ADP-glucose, a building block required for the elongation reactions to produce glycogen. Catalyzes the reaction between ATP and alpha-D-glucose 1-phosphate (G1P) to produce pyrophosphate and ADP-Glc. This Clostridium botulinum (strain Eklund 17B / Type B) protein is Glucose-1-phosphate adenylyltransferase.